The primary structure comprises 130 residues: uncharacterized protein (130 aa).

The tract at residues 48–130 (RGYWPQGPPP…LIAAMEEDER (83 aa)) is disordered. Residues 80–107 (GGDGGGDAGAGPSGVAGTAAGGAGGDGA) are compositionally biased toward gly residues.

This is an uncharacterized protein from Aotus trivirgatus (Three-striped night monkey).